Here is a 694-residue protein sequence, read N- to C-terminus: Follicle-stimulating hormone receptor (694 aa).

An N-terminal signal peptide occupies residues M1–G17. Disulfide bonds link C18-C25 and C23-C32. Residues C18–R46 enclose the LRRNT domain. Residues C18 to R367 are Extracellular-facing. LRR repeat units lie at residues V49–L72, E73–L97, H98–N118, L119–S143, H144–S169, S170–G192, T193–G216, A217–N240, and L241–D259. N191 and N199 each carry an N-linked (GlcNAc...) asparagine glycan. A glycan (N-linked (GlcNAc...) asparagine) is linked at N268. 4 disulfide bridges follow: C275-C347, C276-C292, C276-C357, and C292-C339. An N-linked (GlcNAc...) asparagine glycan is attached at N293. Position 336 is a sulfotyrosine (Y336). The chain crosses the membrane as a helical span at residues V368 to L388. Topologically, residues I389–R399 are cytoplasmic. The helical transmembrane segment at F400 to V422 threads the bilayer. Residues D423–D444 lie on the Extracellular side of the membrane. A disulfide bond links C443 and C518. A helical membrane pass occupies residues A445–L466. Residues E467–H486 are Cytoplasmic-facing. A helical membrane pass occupies residues A487 to V509. Residues S510 to Q529 lie on the Extracellular side of the membrane. A helical transmembrane segment spans residues F530–T551. At H552–R574 the chain is on the cytoplasmic side. A helical transmembrane segment spans residues M575–V598. The Extracellular segment spans residues K599 to K609. A helical membrane pass occupies residues I610–T631. Topologically, residues K632 to S694 are cytoplasmic.

This sequence belongs to the G-protein coupled receptor 1 family. FSH/LSH/TSH subfamily. Homotrimer. Functions as a homotrimer binding the FSH hormone heterodimer composed of CGA and FSHB. Interacts with ARRB2. Interacts with APPL2; interaction is independent of follicle stimulating hormone stimulation. Post-translationally, N-glycosylated; indirectly required for FSH-binding, possibly via a conformational change that allows high affinity binding of hormone. In terms of processing, sulfated.

Its subcellular location is the cell membrane. Its function is as follows. G protein-coupled receptor for follitropin, the follicle-stimulating hormone. Through cAMP production activates the downstream PI3K-AKT and ERK1/ERK2 signaling pathways. This Notamacropus eugenii (Tammar wallaby) protein is Follicle-stimulating hormone receptor (FSHR).